Reading from the N-terminus, the 283-residue chain is Bifunctional protein FolD (283 aa).

Residues 165–167 (GRS), S190, and V231 contribute to the NADP(+) site.

Belongs to the tetrahydrofolate dehydrogenase/cyclohydrolase family. In terms of assembly, homodimer.

The catalysed reaction is (6R)-5,10-methylene-5,6,7,8-tetrahydrofolate + NADP(+) = (6R)-5,10-methenyltetrahydrofolate + NADPH. It carries out the reaction (6R)-5,10-methenyltetrahydrofolate + H2O = (6R)-10-formyltetrahydrofolate + H(+). It functions in the pathway one-carbon metabolism; tetrahydrofolate interconversion. Functionally, catalyzes the oxidation of 5,10-methylenetetrahydrofolate to 5,10-methenyltetrahydrofolate and then the hydrolysis of 5,10-methenyltetrahydrofolate to 10-formyltetrahydrofolate. The polypeptide is Bifunctional protein FolD (Bacillus pumilus (strain SAFR-032)).